Consider the following 103-residue polypeptide: Large ribosomal subunit protein bL21 (103 aa).

The protein belongs to the bacterial ribosomal protein bL21 family. As to quaternary structure, part of the 50S ribosomal subunit. Contacts protein L20.

In terms of biological role, this protein binds to 23S rRNA in the presence of protein L20. The sequence is that of Large ribosomal subunit protein bL21 from Psychrobacter sp. (strain PRwf-1).